The following is a 478-amino-acid chain: PTS system mannitol-specific EIICB component (478 aa).

Residues 1–29 (MQQQEQQQGGMKVKVQRFGSYLSGMIMPN) are Cytoplasmic-facing. The PTS EIIC type-2 domain occupies 18 to 347 (FGSYLSGMIM…VILKSSKASE (330 aa)). The chain crosses the membrane as a helical span at residues 30-51 (IGAFIAWGIITALFIPAGWFPN). Topologically, residues 52–55 (EQLN) are extracellular. A helical membrane pass occupies residues 56-76 (TLVSPMITYLLPLLIAYTGGK). Topologically, residues 77-139 (MIYDHRGGVV…QGFEMLINNF (63 aa)) are cytoplasmic. Residues 140–161 (TAGIVGAALTILAFYAIGPVVL) traverse the membrane as a helical segment. Topologically, residues 162-170 (TLNKLLAAG) are extracellular. A helical transmembrane segment spans residues 171-191 (VEVIVHANLLPVASVFVEPAK). The Cytoplasmic portion of the chain corresponds to 192–278 (VLFLNNAINH…ILMKPALILA (87 aa)). A helical membrane pass occupies residues 279–298 (AIAGGASGLLTFTIFNAGLV). Residues 299–318 (AAASPGSIIALMAMTPRGGY) lie on the Extracellular side of the membrane. The helical transmembrane segment at 319 to 340 (FGVLAGVLVAAAVSFIVSAVIL) threads the bilayer. Residues 341 to 478 (KSSKASEEDL…YDELIEKLKK (138 aa)) lie on the Cytoplasmic side of the membrane. Residues 390–478 (NKIIFACDAG…YDELIEKLKK (89 aa)) enclose the PTS EIIB type-2 domain. Cys396 (phosphocysteine intermediate; for EIIB activity) is an active-site residue. Cys396 is subject to Phosphocysteine; by EIIA.

As to quaternary structure, homodimer.

It localises to the cell membrane. It catalyses the reaction D-mannitol(out) + N(pros)-phospho-L-histidyl-[protein] = D-mannitol 1-phosphate(in) + L-histidyl-[protein]. Its function is as follows. The phosphoenolpyruvate-dependent sugar phosphotransferase system (sugar PTS), a major carbohydrate active transport system, catalyzes the phosphorylation of incoming sugar substrates concomitantly with their translocation across the cell membrane. The enzyme II CmtAB PTS system is involved in D-mannitol transport. This is PTS system mannitol-specific EIICB component from Bacillus subtilis (strain 168).